Consider the following 488-residue polypeptide: Type II restriction enzyme HgaI (488 aa).

It carries out the reaction Endonucleolytic cleavage of DNA to give specific double-stranded fragments with terminal 5'-phosphates.. An S subtype restriction enzyme that recognizes the double-stranded sequences 5'-GACGC-3' and 5'-GCGTC-3' and cleaves respectively 10 bases after G-1 and 10 bases before G'-1. The protein is Type II restriction enzyme HgaI (hgaIR) of Avibacterium volantium (Pasteurella volantium).